We begin with the raw amino-acid sequence, 355 residues long: Ataxin-3-like protein (355 aa).

Residues M1–I180 form the Josephin domain. C14 acts as the Nucleophile in catalysis. The Proton acceptor role is filled by H119. N134 is a catalytic residue. 2 disordered regions span residues L209–Q230 and L253–E331. The span at E215–D228 shows a compositional bias: acidic residues. UIM domains are found at residues Q224–E243 and D244–S258. Over residues L253–S276 the composition is skewed to polar residues. Positions Q278–E293 are enriched in basic and acidic residues.

In terms of tissue distribution, widely expressed.

It is found in the nucleus. The enzyme catalyses Thiol-dependent hydrolysis of ester, thioester, amide, peptide and isopeptide bonds formed by the C-terminal Gly of ubiquitin (a 76-residue protein attached to proteins as an intracellular targeting signal).. Functionally, deubiquitinating enzyme that cleaves both 'Lys-48'-linked and 'Lys-63'-linked poly-ubiquitin chains (in vitro). Acts as a deubiquitinating enzyme for the transcription factor KLF5, playing a role in the regulation of KLF5 stability. The protein is Ataxin-3-like protein of Homo sapiens (Human).